The following is a 415-amino-acid chain: Zona pellucida-like domain-containing protein 1 (415 aa).

A signal peptide spans Met-1 to Ala-19. At Gln-20 to Ser-372 the chain is on the extracellular side. Positions Tyr-43–Asp-320 constitute a ZP domain. 2 disulfides stabilise this stretch: Cys-44/Cys-155 and Cys-79/Cys-104. The N-linked (GlcNAc...) asparagine glycan is linked to Asn-164. 2 disulfides stabilise this stretch: Cys-235-Cys-296 and Cys-255-Cys-313. The interval Arg-323–Ser-359 is disordered. Positions Ser-328–Ser-339 are enriched in low complexity. Over residues Thr-350 to Ser-359 the composition is skewed to polar residues. Residues Ala-373–Leu-393 traverse the membrane as a helical segment. The Cytoplasmic portion of the chain corresponds to Ala-394 to Asp-415.

In terms of processing, proteolytically cleaved before the transmembrane segment to yield the secreted form found in the extracellular matrix of the cupula.

It is found in the cytoplasmic vesicle membrane. The protein localises to the secreted. It localises to the extracellular space. The protein resides in the extracellular matrix. Its function is as follows. Glycoprotein which is a component of the gelatinous extracellular matrix in the cupulae of the vestibular organ. This chain is Zona pellucida-like domain-containing protein 1 (ZPLD1), found in Macaca fascicularis (Crab-eating macaque).